The following is a 140-amino-acid chain: ATP synthase epsilon chain (140 aa).

The protein belongs to the ATPase epsilon chain family. F-type ATPases have 2 components, CF(1) - the catalytic core - and CF(0) - the membrane proton channel. CF(1) has five subunits: alpha(3), beta(3), gamma(1), delta(1), epsilon(1). CF(0) has three main subunits: a, b and c.

It is found in the cell inner membrane. Its function is as follows. Produces ATP from ADP in the presence of a proton gradient across the membrane. The chain is ATP synthase epsilon chain from Saccharophagus degradans (strain 2-40 / ATCC 43961 / DSM 17024).